The primary structure comprises 144 residues: Maximins 2/H8 type 1 (144 aa).

Residues 1–18 (MNFKYIVAVSFLIASAYA) form the signal peptide. Positions 19–43 (RSEENEIQSLSQRDVLEEESLREMR) are excised as a propeptide. Asn70 is modified (asparagine amide). Positions 74–123 (TAEEHEVMKRLETVMRDLDSLDYPEEASERETRGFNQEEIANLFTKKEKR) are excised as a propeptide. An Isoleucine amide modification is found at Ile143.

It belongs to the bombinin family. In terms of tissue distribution, expressed by the skin glands.

It is found in the secreted. In terms of biological role, maximin-2 shows antibacterial activity against both Gram-positive and Gram-negative bacteria. It also shows antimicrobial activity against the fungus C.albicans, but not against A.flavus nor P.uticale. It has little hemolytic activity. Maximin-H8 shows antimicrobial activity against bacteria and against the fungus C.albicans. Shows strong hemolytic activity. The protein is Maximins 2/H8 type 1 of Bombina maxima (Giant fire-bellied toad).